Reading from the N-terminus, the 400-residue chain is MRKLVYLVLVLGLTFLNVRCKSETKQNKKEEQNIGKQYSSLENRFQKLVNYPVGANNFPRSMSLAPEVVHKVPSKDWTSGFFPGNLWLIHELTGDSIYKVKAQEWTVLMEDQKENDRTHDMGFKVYCSFGEGLKQDPDNQYYKDVIIESAKTLITRYNDTVKSIRSWDFNKDVWDFPVIIDNMMNLELLFEATKISGDNIYHNIAVQHANTTLKHQFRPDYSVFHVINYDTISGVVKTKDTHQGFDRNSTWARGQAWAIYGYTMSYRYTNNPKYLAQAEATTQFYMEHENLPKDGVPYWDFNDPEISDAPRDASAAAIVTSALFELYTYTNNKTYLDFATQVLNTLNSEAYLLKDTVNGPFILNHSTGNWPKNDEIDEPIVYGDYYFLEALKRKQNLILK.

The signal sequence occupies residues 1–20 (MRKLVYLVLVLGLTFLNVRC). D120 (nucleophile) is an active-site residue. The active-site Proton donor is the D181.

The protein belongs to the glycosyl hydrolase 88 family.

It localises to the cell surface. Unsaturated glucuronyl hydrolase involved in ulvan degradation. Ulvan is the main polysaccharide component of the Ulvales (green seaweed) cell wall. It is composed of disaccharide building blocks comprising 3-sulfated rhamnose (Rha3S) linked to D-glucuronic acid (GlcA), L-iduronic acid (IduA), or D-xylose (Xyl). Unsaturated glucuronyl hydrolase catalyzes the cleavage of the unsaturated 4-deoxy-L-threo-hex-4-enopyranosiduronic acid (deltaUA) at the non-reducing end of ulvan oligomers, thus forming 5-dehydro-4-deoxy-D-glucuronate. This is Unsaturated glucuronyl hydrolase from Formosa agariphila (strain DSM 15362 / KCTC 12365 / LMG 23005 / KMM 3901 / M-2Alg 35-1).